We begin with the raw amino-acid sequence, 268 residues long: Thiazole synthase (268 aa).

Residue K111 is the Schiff-base intermediate with DXP of the active site. Residues G172, 198–199 (AG), and 220–221 (NT) contribute to the 1-deoxy-D-xylulose 5-phosphate site.

It belongs to the ThiG family. In terms of assembly, homotetramer. Forms heterodimers with either ThiH or ThiS.

Its subcellular location is the cytoplasm. The enzyme catalyses [ThiS sulfur-carrier protein]-C-terminal-Gly-aminoethanethioate + 2-iminoacetate + 1-deoxy-D-xylulose 5-phosphate = [ThiS sulfur-carrier protein]-C-terminal Gly-Gly + 2-[(2R,5Z)-2-carboxy-4-methylthiazol-5(2H)-ylidene]ethyl phosphate + 2 H2O + H(+). It participates in cofactor biosynthesis; thiamine diphosphate biosynthesis. In terms of biological role, catalyzes the rearrangement of 1-deoxy-D-xylulose 5-phosphate (DXP) to produce the thiazole phosphate moiety of thiamine. Sulfur is provided by the thiocarboxylate moiety of the carrier protein ThiS. In vitro, sulfur can be provided by H(2)S. The protein is Thiazole synthase of Caulobacter sp. (strain K31).